A 91-amino-acid polypeptide reads, in one-letter code: UPF0223 protein SAR1071 (91 aa).

Belongs to the UPF0223 family.

This Staphylococcus aureus (strain MRSA252) protein is UPF0223 protein SAR1071.